Reading from the N-terminus, the 172-residue chain is MALRIEDKKAIVAEVAEQVSSALSAAVADYRGLTVNEMTSLRKQARESGVYLRVVRNNLARLAIKGTEFECLADALKGPLVLALSKDEPGAAAKLFKNFQKDHNAFEVKNLAMSGELFGPEKLDDFAKLPTREEALATLLNVMQAPVTKFVRTLNEIPSQAVRVFAAVGDSK.

This sequence belongs to the universal ribosomal protein uL10 family. In terms of assembly, part of the ribosomal stalk of the 50S ribosomal subunit. The N-terminus interacts with L11 and the large rRNA to form the base of the stalk. The C-terminus forms an elongated spine to which L12 dimers bind in a sequential fashion forming a multimeric L10(L12)X complex.

Forms part of the ribosomal stalk, playing a central role in the interaction of the ribosome with GTP-bound translation factors. The polypeptide is Large ribosomal subunit protein uL10 (Francisella tularensis subsp. tularensis (strain FSC 198)).